Consider the following 319-residue polypeptide: 4-hydroxy-3-methylbut-2-enyl diphosphate reductase (319 aa).

C17 lines the [4Fe-4S] cluster pocket. Residues H46 and H79 each coordinate (2E)-4-hydroxy-3-methylbut-2-enyl diphosphate. H46 and H79 together coordinate dimethylallyl diphosphate. Isopentenyl diphosphate contacts are provided by H46 and H79. Residue C101 participates in [4Fe-4S] cluster binding. H129 contributes to the (2E)-4-hydroxy-3-methylbut-2-enyl diphosphate binding site. Dimethylallyl diphosphate is bound at residue H129. An isopentenyl diphosphate-binding site is contributed by H129. The active-site Proton donor is E131. T170 provides a ligand contact to (2E)-4-hydroxy-3-methylbut-2-enyl diphosphate. Residue C200 coordinates [4Fe-4S] cluster. Residues S228, S229, N230, and S273 each coordinate (2E)-4-hydroxy-3-methylbut-2-enyl diphosphate. The dimethylallyl diphosphate site is built by S228, S229, N230, and S273. S228, S229, N230, and S273 together coordinate isopentenyl diphosphate.

Belongs to the IspH family. [4Fe-4S] cluster is required as a cofactor.

It catalyses the reaction isopentenyl diphosphate + 2 oxidized [2Fe-2S]-[ferredoxin] + H2O = (2E)-4-hydroxy-3-methylbut-2-enyl diphosphate + 2 reduced [2Fe-2S]-[ferredoxin] + 2 H(+). The enzyme catalyses dimethylallyl diphosphate + 2 oxidized [2Fe-2S]-[ferredoxin] + H2O = (2E)-4-hydroxy-3-methylbut-2-enyl diphosphate + 2 reduced [2Fe-2S]-[ferredoxin] + 2 H(+). Its pathway is isoprenoid biosynthesis; dimethylallyl diphosphate biosynthesis; dimethylallyl diphosphate from (2E)-4-hydroxy-3-methylbutenyl diphosphate: step 1/1. It participates in isoprenoid biosynthesis; isopentenyl diphosphate biosynthesis via DXP pathway; isopentenyl diphosphate from 1-deoxy-D-xylulose 5-phosphate: step 6/6. Functionally, catalyzes the conversion of 1-hydroxy-2-methyl-2-(E)-butenyl 4-diphosphate (HMBPP) into a mixture of isopentenyl diphosphate (IPP) and dimethylallyl diphosphate (DMAPP). Acts in the terminal step of the DOXP/MEP pathway for isoprenoid precursor biosynthesis. The sequence is that of 4-hydroxy-3-methylbut-2-enyl diphosphate reductase from Cereibacter sphaeroides (strain ATCC 17029 / ATH 2.4.9) (Rhodobacter sphaeroides).